We begin with the raw amino-acid sequence, 557 residues long: TWiK family of potassium channels protein 7 (557 aa).

Disordered stretches follow at residues 1–34 (MTSS…EALL) and 128–151 (DKSG…EEEE). At 1–165 (MTSSSRGYQR…RKFAKLVLPH (165 aa)) the chain is on the cytoplasmic side. Over residues 134–151 (DIDDESDDESKDEDEEEE) the composition is skewed to acidic residues. Residues 166-186 (VALVLLTCTYTVIGALIFYSV) form a helical membrane-spanning segment. N-linked (GlcNAc...) asparagine glycosylation is found at N220 and N237. Positions 270–290 (SIFFAVTVVTTIGYGNPVPVT) form an intramembrane region, pore-forming. Residues 295–315 (IWCILFSLLGIPLTLVTIADL) traverse the membrane as a helical segment. At 316 to 368 (GKFLSEHLVWLYGNYLKLKYLILSRHRKERREHVCEHCHSHGMGHDMNIEEKR) the chain is on the cytoplasmic side. The chain crosses the membrane as a helical span at residues 369-389 (IPAFLVLAILIVYTAFGGVLM). An intramembrane region (pore-forming) is located at residues 397-417 (FFTSFYWSFITMTTVGFGDLM). Residues 426-446 (IILLYIILGLAITTMCIDLVG) traverse the membrane as a helical segment. Residues 447–557 (VQYIRKIHYF…SRYSLNRAFK (111 aa)) lie on the Cytoplasmic side of the membrane.

Belongs to the two pore domain potassium channel (TC 1.A.1.8) family.

The protein resides in the membrane. The sequence is that of TWiK family of potassium channels protein 7 (twk-7) from Caenorhabditis elegans.